The following is a 384-amino-acid chain: 8-amino-7-oxononanoate synthase (384 aa).

R21 is a binding site for substrate. Residue 108–109 (GF) coordinates pyridoxal 5'-phosphate. Residue H133 participates in substrate binding. Residues S179, H207, and T233 each coordinate pyridoxal 5'-phosphate. The residue at position 236 (K236) is an N6-(pyridoxal phosphate)lysine. A substrate-binding site is contributed by T352.

This sequence belongs to the class-II pyridoxal-phosphate-dependent aminotransferase family. BioF subfamily. In terms of assembly, homodimer. Pyridoxal 5'-phosphate is required as a cofactor.

The enzyme catalyses 6-carboxyhexanoyl-[ACP] + L-alanine + H(+) = (8S)-8-amino-7-oxononanoate + holo-[ACP] + CO2. It functions in the pathway cofactor biosynthesis; biotin biosynthesis. In terms of biological role, catalyzes the decarboxylative condensation of pimeloyl-[acyl-carrier protein] and L-alanine to produce 8-amino-7-oxononanoate (AON), [acyl-carrier protein], and carbon dioxide. This Citrobacter koseri (strain ATCC BAA-895 / CDC 4225-83 / SGSC4696) protein is 8-amino-7-oxononanoate synthase.